A 118-amino-acid polypeptide reads, in one-letter code: MTKLKMLSMLTVMIASLFIFSSQALAVQYFTVSTSSGAPVNMRSGPGTNYPIMLSIPSGSRVPYYCYAYGTTVTGKYGTSNIWDQIQWKDSRGVVNIGYVSDTYVYTGSDGPVGYKCN.

The N-terminal stretch at 1-26 (MTKLKMLSMLTVMIASLFIFSSQALA) is a signal peptide. An SH3b domain is found at 30–104 (FTVSTSSGAP…VNIGYVSDTY (75 aa)).

To B.subtilis YraI.

This is an uncharacterized protein from Bacillus subtilis (strain 168).